The following is a 414-amino-acid chain: DNA polymerase IV 1 (414 aa).

The UmuC domain occupies 8–189 (IFHIDMNSFY…LPVGEMHGVG (182 aa)). Mg(2+) contacts are provided by Asp-12 and Asp-108. The active site involves Glu-109. Residues 391-414 (LKKEESKTKGTSFNKDFFQDEKKS) form a disordered region.

It belongs to the DNA polymerase type-Y family. As to quaternary structure, monomer. Mg(2+) serves as cofactor.

It localises to the cytoplasm. The enzyme catalyses DNA(n) + a 2'-deoxyribonucleoside 5'-triphosphate = DNA(n+1) + diphosphate. Its function is as follows. Poorly processive, error-prone DNA polymerase involved in untargeted mutagenesis. Copies undamaged DNA at stalled replication forks, which arise in vivo from mismatched or misaligned primer ends. These misaligned primers can be extended by PolIV. Exhibits no 3'-5' exonuclease (proofreading) activity. May be involved in translesion synthesis (TSL), in conjunction with the beta clamp from PolIII. This Bacillus subtilis (strain 168) protein is DNA polymerase IV 1 (dinB1).